Here is a 296-residue protein sequence, read N- to C-terminus: Polyamine aminopropyltransferase (296 aa).

In terms of domain architecture, PABS spans 16-251; the sequence is HLWYFEYYTG…GMWSYTFASK (236 aa). Glutamine 46 is an S-methyl-5'-thioadenosine binding site. Spermidine-binding residues include histidine 77 and aspartate 101. S-methyl-5'-thioadenosine is bound by residues glutamate 121 and 152–153; that span reads NG. Aspartate 170 (proton acceptor) is an active-site residue. 170 to 173 serves as a coordination point for spermidine; sequence DSTD.

This sequence belongs to the spermidine/spermine synthase family. In terms of assembly, homodimer or homotetramer.

Its subcellular location is the cytoplasm. The enzyme catalyses S-adenosyl 3-(methylsulfanyl)propylamine + putrescine = S-methyl-5'-thioadenosine + spermidine + H(+). Its pathway is amine and polyamine biosynthesis; spermidine biosynthesis; spermidine from putrescine: step 1/1. Functionally, catalyzes the irreversible transfer of a propylamine group from the amino donor S-adenosylmethioninamine (decarboxy-AdoMet) to putrescine (1,4-diaminobutane) to yield spermidine. The protein is Polyamine aminopropyltransferase of Thermotoga petrophila (strain ATCC BAA-488 / DSM 13995 / JCM 10881 / RKU-1).